Reading from the N-terminus, the 156-residue chain is S-ribosylhomocysteine lyase (156 aa).

His-53, His-57, and Cys-122 together coordinate Fe cation.

Belongs to the LuxS family. In terms of assembly, homodimer. Fe cation serves as cofactor.

It carries out the reaction S-(5-deoxy-D-ribos-5-yl)-L-homocysteine = (S)-4,5-dihydroxypentane-2,3-dione + L-homocysteine. In terms of biological role, involved in the synthesis of autoinducer 2 (AI-2) which is secreted by bacteria and is used to communicate both the cell density and the metabolic potential of the environment. The regulation of gene expression in response to changes in cell density is called quorum sensing. Catalyzes the transformation of S-ribosylhomocysteine (RHC) to homocysteine (HC) and 4,5-dihydroxy-2,3-pentadione (DPD). This is S-ribosylhomocysteine lyase from Finegoldia magna (strain ATCC 29328 / DSM 20472 / WAL 2508) (Peptostreptococcus magnus).